Consider the following 89-residue polypeptide: Putative membrane protein insertion efficiency factor (89 aa).

It belongs to the UPF0161 family.

The protein resides in the cell membrane. Functionally, could be involved in insertion of integral membrane proteins into the membrane. This is Putative membrane protein insertion efficiency factor from Exiguobacterium sp. (strain ATCC BAA-1283 / AT1b).